Here is a 117-residue protein sequence, read N- to C-terminus: Small ribosomal subunit protein uS13 (117 aa).

The interval 94 to 117 is disordered; sequence SLPLRGQRTKTNARTRKGPRRLIK.

This sequence belongs to the universal ribosomal protein uS13 family. As to quaternary structure, part of the 30S ribosomal subunit. Forms a loose heterodimer with protein S19. Forms two bridges to the 50S subunit in the 70S ribosome.

In terms of biological role, located at the top of the head of the 30S subunit, it contacts several helices of the 16S rRNA. In the 70S ribosome it contacts the 23S rRNA (bridge B1a) and protein L5 of the 50S subunit (bridge B1b), connecting the 2 subunits; these bridges are implicated in subunit movement. Contacts the tRNAs in the A and P-sites. This chain is Small ribosomal subunit protein uS13, found in Vesicomyosocius okutanii subsp. Calyptogena okutanii (strain HA).